A 536-amino-acid polypeptide reads, in one-letter code: CUGBP Elav-like family member 2 (536 aa).

RRM domains lie at 58-141 (IKMF…PADS), 150-230 (RKLF…FADT), and 451-529 (ANLF…LKRS).

Belongs to the CELF/BRUNOL family.

It is found in the nucleus. The protein localises to the cytoplasm. In terms of biological role, RNA-binding protein implicated in the regulation of several post-transcriptional events. May be involved in pre-mRNA alternative splicing, mRNA translation repression and stability. The chain is CUGBP Elav-like family member 2 (celf2) from Xenopus laevis (African clawed frog).